A 97-amino-acid polypeptide reads, in one-letter code: Intermembrane phospholipid transport system binding protein MlaB (97 aa).

The STAS domain occupies 1-97 (MSESLSWMQT…YNLPADVLPR (97 aa)).

In terms of assembly, the complex is composed of two ATP-binding proteins (MlaF), two transmembrane proteins (MlaE), two cytoplasmic solute-binding proteins (MlaB) and six periplasmic solute-binding proteins (MlaD).

It localises to the cytoplasm. Functionally, part of the ABC transporter complex MlaFEDB, which is involved in a phospholipid transport pathway that maintains lipid asymmetry in the outer membrane by retrograde trafficking of phospholipids from the outer membrane to the inner membrane. MlaB plays critical roles in both the assembly and activity of the complex. May act by modulating MlaF structure and stability. This chain is Intermembrane phospholipid transport system binding protein MlaB, found in Escherichia coli (strain K12).